The primary structure comprises 3977 residues: Hybrid PKS-NRPS synthetase gkaA (3977 aa).

The Ketosynthase family 3 (KS3) domain maps to 4–441; sequence EEPIAVIGSG…GTNAHVILEN (438 aa). Residues cysteine 177, histidine 316, and histidine 361 each act as for beta-ketoacyl synthase activity in the active site. The 317-residue stretch at 551 to 867 folds into the Malonyl-CoA:ACP transacylase (MAT) domain; that stretch reads VFTGQGAQWP…TGVIHRGKND (317 aa). The N-terminal hotdog fold stretch occupies residues 937-1072; it reads NPLLGTRTTD…GRITVTLGES (136 aa). Positions 937-1241 constitute a PKS/mFAS DH domain; it reads NPLLGTRTTD…VVAFSEATAD (305 aa). Residue histidine 969 is the Proton acceptor; for dehydratase activity of the active site. The interval 1087–1241 is C-terminal hotdog fold; that stretch reads LVSIPQDRFY…VVAFSEATAD (155 aa). The active-site Proton donor; for dehydratase activity is the aspartate 1147. The interval 1286–1580 is methyltransferase (cMeT) domain; that stretch reads YMKKTVEEFP…FSGIDSSTPE (295 aa). Residues 2128–2301 form the Ketoreductase (KR) domain; sequence TYVLFGLTSD…AASILHIGAV (174 aa). Residues 2409 to 2490 form the Carrier 1 domain; that stretch reads SEVFEIISGA…QLLEYAIDNM (82 aa). Serine 2450 is subject to O-(pantetheine 4'-phosphoryl)serine. The tract at residues 2497–2542 is disordered; it reads HSNGEQGTVSDSGSTNIQLTPASTPSVPSVNLASDSTGSSQVGEDV. Over residues 2499–2538 the composition is skewed to polar residues; the sequence is NGEQGTVSDSGSTNIQLTPASTPSVPSVNLASDSTGSSQV. The condensation stretch occupies residues 2584 to 3018; that stretch reads EKIIPMSPGQ…LKDISLFSKE (435 aa). The interval 3048–3437 is adenylation; that stretch reads IAEHPDTISI…GALEILGRID (390 aa). Residues 3552–3632 enclose the Carrier 2 domain; it reads FSLTPTEDKL…AMASLITPAS (81 aa). O-(pantetheine 4'-phosphoryl)serine is present on serine 3592. Residues 3672–3890 enclose the Thioester reductase (TE) domain; it reads LTGATGFLGH…FVDLVSVQNV (219 aa).

In the C-terminal section; belongs to the NRP synthetase family. The cofactor is pantetheine 4'-phosphate.

The protein operates within mycotoxin biosynthesis. Its function is as follows. Hybrid PKS-NRPS synthetase; part of the gene cluster that mediates the biosynthesis of GKK1032, fungal natural products containing a macrocyclic para-cyclophane connected to a decahydrofluorene ring system that show potent antitumor activities. Within the pathway, the PKS-NRPS gkaA, with the help of the trans-enoyl reductase gkaC, synthesize the polyketide-tyrosyl acyl thioester product which can be reductively off-loaded by the terminal reductase (R) domain in gkaA. The PKS module of gkaA acts in combination with the trans-acting enoyl reductase gkaC to produce a methylated polyketide attached to the ACP domain. In parallel, the adenylation (A) domain of the NRPS module activated L-tyrosine, which is then transferred to the ACP domain. The condensation (C) domain subsequently links this group to the polyketide chain, forming an enzyme-bound amide. The alpha/beta hydrolase gkaG is then required to catalyze the subsequent Knoevenagel condensation that affords the 3-pyrrolin-2-one ring, whereas the three proteins gkaB, gkadX and gkaZ then function synergistically to form the cyclophane. The chain is Hybrid PKS-NRPS synthetase gkaA from Penicillium citrinum.